A 513-amino-acid chain; its full sequence is 2-isopropylmalate synthase (513 aa).

Residues 5–268 (LIIFDTTLRD…EVGIDTTQIV (264 aa)) enclose the Pyruvate carboxyltransferase domain. Mn(2+) contacts are provided by Asp14, His202, His204, and Asn239. Residues 394 to 513 (RLLSLEQQSA…SKNERVAAQG (120 aa)) form a regulatory domain region.

The protein belongs to the alpha-IPM synthase/homocitrate synthase family. LeuA type 1 subfamily. In terms of assembly, homodimer. The cofactor is Mn(2+).

It is found in the cytoplasm. The enzyme catalyses 3-methyl-2-oxobutanoate + acetyl-CoA + H2O = (2S)-2-isopropylmalate + CoA + H(+). Its pathway is amino-acid biosynthesis; L-leucine biosynthesis; L-leucine from 3-methyl-2-oxobutanoate: step 1/4. Catalyzes the condensation of the acetyl group of acetyl-CoA with 3-methyl-2-oxobutanoate (2-ketoisovalerate) to form 3-carboxy-3-hydroxy-4-methylpentanoate (2-isopropylmalate). In Methylibium petroleiphilum (strain ATCC BAA-1232 / LMG 22953 / PM1), this protein is 2-isopropylmalate synthase.